The following is a 150-amino-acid chain: Translation machinery-associated protein 17 (150 aa).

Ser24 and Ser68 each carry phosphoserine. A disordered region spans residues Arg110–Asn139. Positions Lys118–Thr127 are enriched in basic and acidic residues.

Interacts with RPT6. Interacts with the 40S and 60S ribosomal subunits.

It is found in the cytoplasm. Its subcellular location is the nucleus. Functionally, ATPase-dedicated chaperone that assists the formation of the RPT6-RPT3 ATPase pair, an early step in proteasome assembly. Plays a key role in maintaining homeostatic proteasome levels and adjusting proteasome assembly when demands increase, such as during proteasome stresses. Function overlaps with RPN14. The protein is Translation machinery-associated protein 17 (TMA17) of Saccharomyces cerevisiae (strain ATCC 204508 / S288c) (Baker's yeast).